The chain runs to 239 residues: Probable transcriptional regulatory protein BCAH187_A0615 (239 aa).

This sequence belongs to the TACO1 family. YeeN subfamily.

The protein resides in the cytoplasm. This is Probable transcriptional regulatory protein BCAH187_A0615 from Bacillus cereus (strain AH187).